The chain runs to 33 residues: Ice-structuring protein GS-5 (33 aa).

Blocked amino end (Met) is present on Met1.

This sequence belongs to the type-I AFP family.

Antifreeze proteins lower the blood freezing point. The polypeptide is Ice-structuring protein GS-5 (Myoxocephalus aenaeus (Grubby sculpin)).